Reading from the N-terminus, the 452-residue chain is FAD transporter (452 aa).

Helical transmembrane passes span 21–41, 49–69, 96–116, 131–151, 167–187, 199–219, 248–270, 283–303, 324–344, 357–377, 392–412, and 417–437; these read LPNLIGIMTILGFSLADTFFI, LAAISFTFPVTLIISSIAIGV, ALLLTFILIASLSALGSIFIE, LIHDYMMYWYVGAPLLVLLMV, MIMTLAAIINLILDPLLIFGI, AIATLFSWLVALSLSGYLLII, AALMNLINPLANAVIMAMLAHID, LESVLLIVVMALSSSLMPFIA, FILVFQTLLYIPLAFFAQPLA, LSFYILVLPCAYGPLGIVIIF, VINLCRLVLLMLPLAALGSYI, and GLLLALPITNLLMGIACYYLA.

Belongs to the multi antimicrobial extrusion (MATE) (TC 2.A.66.1) family.

The protein resides in the cell inner membrane. In terms of biological role, flavin adenine dinucleotide (FAD) transporter that facilitates export of flavin electron shuttles. The sequence is that of FAD transporter from Shewanella oneidensis (strain ATCC 700550 / JCM 31522 / CIP 106686 / LMG 19005 / NCIMB 14063 / MR-1).